The primary structure comprises 494 residues: Aldehyde dehydrogenase family 7 member A1 (494 aa).

247-252 (GSSKVG) is an NAD(+) binding site. Glutamate 269 functions as the Proton acceptor in the catalytic mechanism. Cysteine 303 functions as the Nucleophile in the catalytic mechanism.

This sequence belongs to the aldehyde dehydrogenase family. In terms of assembly, homotetramer.

The catalysed reaction is an aldehyde + NAD(+) + H2O = a carboxylate + NADH + 2 H(+). This chain is Aldehyde dehydrogenase family 7 member A1 (BTG-26), found in Brassica napus (Rape).